We begin with the raw amino-acid sequence, 578 residues long: 2-succinyl-5-enolpyruvyl-6-hydroxy-3-cyclohexene-1-carboxylate synthase (578 aa).

The segment at 186–208 is disordered; that stretch reads LPAAGGEHHPAEPRSTPWDGPVP.

Belongs to the TPP enzyme family. MenD subfamily. As to quaternary structure, homodimer. The cofactor is Mg(2+). It depends on Mn(2+) as a cofactor. Thiamine diphosphate is required as a cofactor.

It catalyses the reaction isochorismate + 2-oxoglutarate + H(+) = 5-enolpyruvoyl-6-hydroxy-2-succinyl-cyclohex-3-ene-1-carboxylate + CO2. Its pathway is quinol/quinone metabolism; 1,4-dihydroxy-2-naphthoate biosynthesis; 1,4-dihydroxy-2-naphthoate from chorismate: step 2/7. It functions in the pathway cofactor biosynthesis; phylloquinone biosynthesis. In terms of biological role, catalyzes the thiamine diphosphate-dependent decarboxylation of 2-oxoglutarate and the subsequent addition of the resulting succinic semialdehyde-thiamine pyrophosphate anion to isochorismate to yield 2-succinyl-5-enolpyruvyl-6-hydroxy-3-cyclohexene-1-carboxylate (SEPHCHC). In Synechococcus sp. (strain WH7803), this protein is 2-succinyl-5-enolpyruvyl-6-hydroxy-3-cyclohexene-1-carboxylate synthase.